The primary structure comprises 283 residues: Elongation factor Ts (283 aa).

An involved in Mg(2+) ion dislocation from EF-Tu region spans residues 80 to 83; it reads TDFV.

It belongs to the EF-Ts family.

The protein localises to the cytoplasm. Functionally, associates with the EF-Tu.GDP complex and induces the exchange of GDP to GTP. It remains bound to the aminoacyl-tRNA.EF-Tu.GTP complex up to the GTP hydrolysis stage on the ribosome. The polypeptide is Elongation factor Ts (Haemophilus influenzae (strain PittEE)).